A 132-amino-acid polypeptide reads, in one-letter code: Replication enhancer protein (132 aa).

This sequence belongs to the geminiviridae replication enhancer protein family. Homooligomer. Interacts with the replication-associated protein (REP). Interacts with host proliferating cell nuclear antigen (PCNA). Interacts with host retinoblastoma-related protein 1 (RBR1), and may thereby deregulate the host cell cycle. Oligomerization and interaction with PCNA are necessary for optimal replication enhancement.

Functionally, increases viral DNA accumulation. Enhances infectivity and symptom expression. In Cabbage leaf curl virus (isolate Jamaica) (CaLCuV), this protein is Replication enhancer protein.